A 419-amino-acid polypeptide reads, in one-letter code: L-rhamnose isomerase (419 aa).

Mn(2+) contacts are provided by His262, Asp294, and Asp296.

It belongs to the rhamnose isomerase family. As to quaternary structure, homotetramer. Requires Mn(2+) as cofactor.

Its subcellular location is the cytoplasm. It carries out the reaction L-rhamnopyranose = L-rhamnulose. Its pathway is carbohydrate degradation; L-rhamnose degradation; glycerone phosphate from L-rhamnose: step 1/3. Catalyzes the interconversion of L-rhamnose and L-rhamnulose. The sequence is that of L-rhamnose isomerase from Salmonella gallinarum (strain 287/91 / NCTC 13346).